A 281-amino-acid polypeptide reads, in one-letter code: CDAN1-interacting nuclease 1 (281 aa).

Position 114 is a phosphothreonine (Thr-114).

Its subcellular location is the nucleus. It localises to the cytoplasm. In terms of biological role, plays a role in erythroid cell differentiation. In Mus musculus (Mouse), this protein is CDAN1-interacting nuclease 1.